The sequence spans 76 residues: Toxin Acra III-2 (76 aa).

Residues 3 to 67 form the LCN-type CS-alpha/beta domain; it reads VPGNYPLNTY…IWDAVKNHCT (65 aa). 3 cysteine pairs are disulfide-bonded: Cys-18-Cys-41, Cys-27-Cys-46, and Cys-31-Cys-48.

It belongs to the long (3 C-C) scorpion toxin superfamily. Sodium channel inhibitor family. Beta subfamily. Expressed by the venom gland.

The protein localises to the secreted. Binds to sodium channels (Nav) and affects the channel activation process. The sequence is that of Toxin Acra III-2 from Androctonus crassicauda (Arabian fat-tailed scorpion).